A 186-amino-acid chain; its full sequence is uncharacterized protein (186 aa).

The signal sequence occupies residues 1-18; the sequence is MNKFLFAAALIVSGLLVG. The N-palmitoyl cysteine moiety is linked to residue cysteine 19. Cysteine 19 carries the S-diacylglycerol cysteine lipid modification.

It is found in the cell membrane. This is an uncharacterized protein from Escherichia coli (strain K12).